We begin with the raw amino-acid sequence, 349 residues long: METNFSIPLNESEEVLPEPAGHTVLWIFSLLVHGVTFIFGVLGNGLVIWVAGFRMTRTVNTICYLNLALADFSFSAILPFRMVSVAMREKWPFGTFLCKLVHVMIDINLFVSVYLITIIALDRCICVLHPAWAQNHRTMSLAKRVMMGLWILAIVLTLPNFIFWTTISTKNGDTYCIFNFPFWGDTAVERLNAFITMGKVFLILHFIIGFSMPMSIITVCYGIIAAKIHRNHMIKSSSPLRVFAAVVASFFICWFPYELIGILMAVWLKEMLLNGKYKIILVLLNPTSSLAFFNSCLNPILYVFLGSNFQERLIRSLPTSLERALTEVPDSAQTSNTHTNSASPPEETE.

Over 1–27 (METNFSIPLNESEEVLPEPAGHTVLWI) the chain is Extracellular. Residues Asn-4 and Asn-10 are each glycosylated (N-linked (GlcNAc...) asparagine). The helical transmembrane segment at 28 to 50 (FSLLVHGVTFIFGVLGNGLVIWV) threads the bilayer. Topologically, residues 51–61 (AGFRMTRTVNT) are cytoplasmic. A helical membrane pass occupies residues 62 to 83 (ICYLNLALADFSFSAILPFRMV). The Extracellular portion of the chain corresponds to 84–100 (SVAMREKWPFGTFLCKL). Cys-98 and Cys-176 are oxidised to a cystine. The helical transmembrane segment at 101–121 (VHVMIDINLFVSVYLITIIAL) threads the bilayer. Residues 122–140 (DRCICVLHPAWAQNHRTMS) are Cytoplasmic-facing. The helical transmembrane segment at 141–162 (LAKRVMMGLWILAIVLTLPNFI) threads the bilayer. The Extracellular segment spans residues 163–205 (FWTTISTKNGDTYCIFNFPFWGDTAVERLNAFITMGKVFLILH). The chain crosses the membrane as a helical span at residues 206-226 (FIIGFSMPMSIITVCYGIIAA). The Cytoplasmic segment spans residues 227–242 (KIHRNHMIKSSSPLRV). The chain crosses the membrane as a helical span at residues 243-266 (FAAVVASFFICWFPYELIGILMAV). Residues 267–286 (WLKEMLLNGKYKIILVLLNP) are Extracellular-facing. A helical transmembrane segment spans residues 287–306 (TSSLAFFNSCLNPILYVFLG). At 307–349 (SNFQERLIRSLPTSLERALTEVPDSAQTSNTHTNSASPPEETE) the chain is on the cytoplasmic side. Positions 328–349 (VPDSAQTSNTHTNSASPPEETE) are disordered. Over residues 331-343 (SAQTSNTHTNSAS) the composition is skewed to polar residues.

The protein belongs to the G-protein coupled receptor 1 family.

The protein localises to the cell membrane. Its function is as follows. Low affinity receptor for N-formyl-methionyl peptides, which are powerful neutrophils chemotactic factors. Binding of FMLP to the receptor causes activation of neutrophils. This response is mediated via a G-protein that activates a phosphatidylinositol-calcium second messenger system. The sequence is that of N-formyl peptide receptor 3 (FPR3) from Pongo pygmaeus (Bornean orangutan).